Consider the following 285-residue polypeptide: Bifunctional protein FolD (285 aa).

NADP(+)-binding positions include 165–167 and S190; that span reads GRS.

Belongs to the tetrahydrofolate dehydrogenase/cyclohydrolase family. In terms of assembly, homodimer.

It catalyses the reaction (6R)-5,10-methylene-5,6,7,8-tetrahydrofolate + NADP(+) = (6R)-5,10-methenyltetrahydrofolate + NADPH. The enzyme catalyses (6R)-5,10-methenyltetrahydrofolate + H2O = (6R)-10-formyltetrahydrofolate + H(+). It functions in the pathway one-carbon metabolism; tetrahydrofolate interconversion. Functionally, catalyzes the oxidation of 5,10-methylenetetrahydrofolate to 5,10-methenyltetrahydrofolate and then the hydrolysis of 5,10-methenyltetrahydrofolate to 10-formyltetrahydrofolate. This Burkholderia mallei (strain NCTC 10247) protein is Bifunctional protein FolD.